We begin with the raw amino-acid sequence, 1104 residues long: Receptor-mediated endocytosis protein 6 (1104 aa).

The region spanning 156–389 is the Ras-GAP domain; it reads LKIAQVVCYL…EMMDSLLVEN (234 aa). The disordered stretch occupies residues 663–682; the sequence is SSLAKQPSGMVSSASAQNIP. The region spanning 966–1104 is the VPS9 domain; the sequence is QKKDKLLQSV…SAVEYIKTIL (139 aa).

The protein belongs to the GAPVD1 family. As to quaternary structure, interacts with GDP-bound rab-5. Interacts with alpha-adaptin.

The protein localises to the membrane. It localises to the cytoplasmic vesicle. The protein resides in the clathrin-coated vesicle. In terms of biological role, acts both as a GTPase-activating protein (GAP) and a guanine nucleotide exchange factor (GEF), and participates in endocytosis. Acts by regulating the activation of rab-5 by exchanging bound GDP for free GTP at clathrin coated pits. In Caenorhabditis briggsae, this protein is Receptor-mediated endocytosis protein 6 (rme-6).